We begin with the raw amino-acid sequence, 391 residues long: MGRLKQCWSSLLVLAVLVIGTGAVPITYLQSAVAKGAVCLDGSAPAYHFDKGFGSGVNNWIVHMEGGGWCTDVASCNERKGTMKGSSKFMNKDFGFSGILGGKQSTNPDFYNWNRIKVRYCDGSSFTGNVEAVNPANKLFFRGARVWRAVVDDLMAKGMKNAQNAILSGCSAGALAAILHCDTFRAILPRTASVKCVSDAGYFIHGKDITGGSYIQSYYSKVVALHGSAKSLPVSCTSKMKPELCFFPQYVVPSMRTPLFVINAAFDSWQIKNVLAPTAVDKGKEWKNCKLDLKKCSAAQLKTVQGFRDQMMRALSPVHSTPSRGLFLDSCHAHCQGGSAASWSGDKGPQVANTRIAKAVGNWFYGRSAFQKIDCPSPTCNPTCPAISTED.

The signal sequence occupies residues 1 to 23 (MGRLKQCWSSLLVLAVLVIGTGA). Catalysis depends on charge relay system residues Ser171, Asp267, and His334.

Belongs to the pectinacetylesterase family.

The protein localises to the secreted. The protein resides in the cell wall. Functionally, hydrolyzes acetyl esters in homogalacturonan regions of pectin. In type I primary cell wall, galacturonic acid residues of pectin can be acetylated at the O-2 and O-3 positions. Decreasing the degree of acetylation of pectin gels in vitro alters their physical properties. This chain is Pectin acetylesterase 7, found in Arabidopsis thaliana (Mouse-ear cress).